Here is a 48-residue protein sequence, read N- to C-terminus: Phospholipase A2 superbin d (48 aa).

3 residues coordinate Ca(2+): tyrosine 28, glycine 30, and glycine 32. Cysteine 29 and cysteine 45 form a disulfide bridge. The active site involves histidine 48.

Ca(2+) serves as cofactor. As to expression, expressed by the venom gland.

It is found in the secreted. It carries out the reaction a 1,2-diacyl-sn-glycero-3-phosphocholine + H2O = a 1-acyl-sn-glycero-3-phosphocholine + a fatty acid + H(+). In terms of biological role, snake venom phospholipase A2 (PLA2) that inhibits collagen-induced platelet aggregation. In terms of inhibition of platelet aggregation, superbin d is less potent as superbin a, b, and c. PLA2 catalyzes the calcium-dependent hydrolysis of the 2-acyl groups in 3-sn-phosphoglycerides. The protein is Phospholipase A2 superbin d of Austrelaps superbus (Lowland copperhead snake).